A 623-amino-acid polypeptide reads, in one-letter code: (-)-alpha-pinene synthase 1, chloroplastic (623 aa).

Residues Met-1 to Ser-52 constitute a chloroplast transit peptide. Mg(2+) is bound by residues Asp-374, Asp-378, and Asp-526. The DDXXD motif motif lies at Asp-374–Asp-378.

The protein belongs to the terpene synthase family. Tpsd subfamily. Mg(2+) is required as a cofactor. Mn(2+) serves as cofactor.

The protein resides in the plastid. Its subcellular location is the chloroplast. It carries out the reaction (2E)-geranyl diphosphate = (1S,5S)-alpha-pinene + diphosphate. It catalyses the reaction (2E)-geranyl diphosphate = (1S,5S)-beta-pinene + diphosphate. The enzyme catalyses (2E)-geranyl diphosphate = (-)-beta-phellandrene + diphosphate. It participates in terpene metabolism; oleoresin biosynthesis. It functions in the pathway secondary metabolite biosynthesis; terpenoid biosynthesis. In terms of biological role, monoterpene synthase (TPS) involved in the biosynthesis of monoterpene natural products included in conifer oleoresin secretions and volatile emissions; these compounds contribute to biotic and abiotic stress defense against herbivores and pathogens. Catalyzes the conversion of (2E)-geranyl diphosphate (GPP) to (-)-alpha-pinene and (-)-beta-pinene, and, to a lower extent, to (-)-beta-phellandrene. The sequence is that of (-)-alpha-pinene synthase 1, chloroplastic from Pinus banksiana (Jack pine).